A 103-amino-acid polypeptide reads, in one-letter code: Large ribosomal subunit protein bL21 (103 aa).

This sequence belongs to the bacterial ribosomal protein bL21 family. In terms of assembly, part of the 50S ribosomal subunit. Contacts protein L20.

This protein binds to 23S rRNA in the presence of protein L20. This Ralstonia pickettii (strain 12J) protein is Large ribosomal subunit protein bL21.